Consider the following 246-residue polypeptide: UPF0246 protein str1967 (246 aa).

Belongs to the UPF0246 family.

The polypeptide is UPF0246 protein str1967 (Streptococcus thermophilus (strain CNRZ 1066)).